The primary structure comprises 360 residues: Magnesium-protoporphyrin IX monomethyl ester [oxidative] cyclase (360 aa).

It belongs to the AcsF family. Fe cation is required as a cofactor.

It carries out the reaction Mg-protoporphyrin IX 13-monomethyl ester + 3 NADPH + 3 O2 + 2 H(+) = 3,8-divinyl protochlorophyllide a + 3 NADP(+) + 5 H2O. Its pathway is porphyrin-containing compound metabolism; chlorophyll biosynthesis (light-independent). Catalyzes the formation of the isocyclic ring in chlorophyll biosynthesis. Mediates the cyclase reaction, which results in the formation of divinylprotochlorophyllide (Pchlide) characteristic of all chlorophylls from magnesium-protoporphyrin IX 13-monomethyl ester (MgPMME). This Synechococcus sp. (strain WH7803) protein is Magnesium-protoporphyrin IX monomethyl ester [oxidative] cyclase.